The primary structure comprises 406 residues: Phosphopentomutase (406 aa).

Asp10, Asp305, His310, Asp346, His347, and His358 together coordinate Mn(2+).

This sequence belongs to the phosphopentomutase family. The cofactor is Mn(2+).

The protein resides in the cytoplasm. The enzyme catalyses 2-deoxy-alpha-D-ribose 1-phosphate = 2-deoxy-D-ribose 5-phosphate. It carries out the reaction alpha-D-ribose 1-phosphate = D-ribose 5-phosphate. The protein operates within carbohydrate degradation; 2-deoxy-D-ribose 1-phosphate degradation; D-glyceraldehyde 3-phosphate and acetaldehyde from 2-deoxy-alpha-D-ribose 1-phosphate: step 1/2. In terms of biological role, isomerase that catalyzes the conversion of deoxy-ribose 1-phosphate (dRib-1-P) and ribose 1-phosphate (Rib-1-P) to deoxy-ribose 5-phosphate (dRib-5-P) and ribose 5-phosphate (Rib-5-P), respectively. This Sinorhizobium medicae (strain WSM419) (Ensifer medicae) protein is Phosphopentomutase.